A 247-amino-acid chain; its full sequence is T-cell surface glycoprotein CD8 alpha chain (247 aa).

An N-terminal signal peptide occupies residues 1-27; that stretch reads MASPLTRFLSLNLLLLGESIILGSGEA. Residues 28 to 139 form the Ig-like V-type domain; that stretch reads KPQAPELRIF…SVISNSVMYF (112 aa). Topologically, residues 28–196 are extracellular; that stretch reads KPQAPELRIF…TGLDFACDIY (169 aa). Residues Cys-53 and Cys-129 are joined by a disulfide bond. N-linked (GlcNAc...) asparagine glycosylation is found at Asn-69, Asn-97, and Asn-150. The disordered stretch occupies residues 156–182; it reads PVLRTPSPVHPTGTSQPQRPEDCRPRG. Residues 197–217 traverse the membrane as a helical segment; it reads IWAPLAGICVALLLSLIITLI. Residues 218–247 are Cytoplasmic-facing; sequence CYHRSRKRVCKCPRPLVRQEGKPRPSEKIV.

In terms of assembly, forms disulfide-linked heterodimers with CD8B at the cell surface. Also forms homodimers in several cell types including NK-cells or peripheral blood T-lymphocytes. Interacts with the MHC class I HLA-A/B2M dimer. Interacts with LCK in a zinc-dependent manner. Post-translationally, palmitoylated, but association with CD8B seems to be more important for the enrichment of CdD8A in lipid rafts. In terms of processing, phosphorylated in cytotoxic T-lymphocytes (CTLs) following activation.

It localises to the cell membrane. In terms of biological role, integral membrane glycoprotein that plays an essential role in the immune response and serves multiple functions in responses against both external and internal offenses. In T-cells, functions primarily as a coreceptor for MHC class I molecule:peptide complex. The antigens presented by class I peptides are derived from cytosolic proteins while class II derived from extracellular proteins. Interacts simultaneously with the T-cell receptor (TCR) and the MHC class I proteins presented by antigen presenting cells (APCs). In turn, recruits the Src kinase LCK to the vicinity of the TCR-CD3 complex. LCK then initiates different intracellular signaling pathways by phosphorylating various substrates ultimately leading to lymphokine production, motility, adhesion and activation of cytotoxic T-lymphocytes (CTLs). This mechanism enables CTLs to recognize and eliminate infected cells and tumor cells. In NK-cells, the presence of CD8A homodimers at the cell surface provides a survival mechanism allowing conjugation and lysis of multiple target cells. CD8A homodimer molecules also promote the survival and differentiation of activated lymphocytes into memory CD8 T-cells. This chain is T-cell surface glycoprotein CD8 alpha chain (Cd8a), found in Mus musculus (Mouse).